The primary structure comprises 147 residues: MEKYNREEFEEVIVDIGRVTKVVKGGRRFRFTALVVVGNRNGLVGFGYGKAKEVPDAMRKAIDDAFKNIIHVKIKGTTIPHDVEVKYNASRMLLRPASEGTGVIAGGSARPIIELAGIKDILTKSLGSNNSANVVRATIKALSLLKS.

In terms of domain architecture, S5 DRBM spans 9–72; it reads FEEVIVDIGR…DDAFKNIIHV (64 aa).

Belongs to the universal ribosomal protein uS5 family. Part of the 30S ribosomal subunit. Contacts proteins S4 and S8.

With S4 and S12 plays an important role in translational accuracy. In terms of biological role, located at the back of the 30S subunit body where it stabilizes the conformation of the head with respect to the body. This is Small ribosomal subunit protein uS5 from Campylobacter concisus (strain 13826).